Here is a 214-residue protein sequence, read N- to C-terminus: Phosphopantothenoylcysteine decarboxylase HAL3 (214 aa).

FMN contacts are provided by residues 30 to 32 and 55 to 57; these read GSV and TRA. Histidine 92 (proton donor) is an active-site residue. FMN-binding positions include 108–111 and alanine 142; that span reads SANT. N-[(R)-4-phosphopantothenoyl]-L-cysteine is bound by residues asparagine 144, arginine 174, and alanine 176. Cysteine 177 (proton donor) is an active-site residue. N-[(R)-4-phosphopantothenoyl]-L-cysteine is bound at residue methionine 185.

It belongs to the HFCD (homooligomeric flavin containing Cys decarboxylase) superfamily. As to quaternary structure, homotrimer. FMN serves as cofactor. Mainly expressed in stems, to a lower extent in flowers, leaves and fruits, and at basal levels in roots.

The protein localises to the cell membrane. It localises to the cytoplasm. The enzyme catalyses N-[(R)-4-phosphopantothenoyl]-L-cysteine + H(+) = (R)-4'-phosphopantetheine + CO2. Its pathway is cofactor biosynthesis; coenzyme A biosynthesis; CoA from (R)-pantothenate: step 3/5. In terms of biological role, involved in plant growth, and promotes salt and osmotic tolerance, probably via coenzyme A (CoA) accumulation and endogenous proline accumulation. Catalyzes the decarboxylation of 4'-phosphopantothenoylcysteine to 4'-phosphopantetheine, a key step in coenzyme A biosynthesis. Required for roots development. The protein is Phosphopantothenoylcysteine decarboxylase HAL3 of Malus domestica (Apple).